The chain runs to 118 residues: Ribonuclease P protein component (118 aa).

Belongs to the RnpA family. Consists of a catalytic RNA component (M1 or rnpB) and a protein subunit.

It catalyses the reaction Endonucleolytic cleavage of RNA, removing 5'-extranucleotides from tRNA precursor.. Functionally, RNaseP catalyzes the removal of the 5'-leader sequence from pre-tRNA to produce the mature 5'-terminus. It can also cleave other RNA substrates such as 4.5S RNA. The protein component plays an auxiliary but essential role in vivo by binding to the 5'-leader sequence and broadening the substrate specificity of the ribozyme. The sequence is that of Ribonuclease P protein component from Mycoplasma pneumoniae (strain ATCC 29342 / M129 / Subtype 1) (Mycoplasmoides pneumoniae).